A 566-amino-acid polypeptide reads, in one-letter code: MGSAGFSVGKFHVEVASRGRECVSGTPECGNRLGSAGFGALCLELRGADPAWGPFAAHGRSRRQGSRFLWLLKILVIILVLGIVGFMFGSMFLQAVFSSPKPELPSPAPGVQKLKLLPEERLRNLFSYDGIWLFPKNQCKCEANKEQGGYNFQDAYGQSDLPAVKARRQAEFEHFQRREGLPRPLPLLVQPNLPFGYPVHGVEVMPLHTVPIPGLQFEGPDAPVYEVTLTASLGTLNTLADVPDSVVQGRGQKQLIISTSDRKLLKFILQHVTYTSTGYQHQKVDIVSLESRSSVAKFPVTIRHPVIPKLYDPGPERKLRNLVTIATKTFLRPHKLMIMLRSIREYYPDLTVIVADDSQKPLEIKDNHVEYYTMPFGKGWFAGRNLAISQVTTKYVLWVDDDFLFNEETKIEVLVDVLEKTELDVVGGSVLGNVFQFKLLLEQSENGACLHKRMGFFQPLDGFPSCVVTSGVVNFFLAHTERLQRVGFDPRLQRVAHSEFFIDGLGTLLVGSCPEVIIGHQSRSPVVDSELAALEKTYNTYRSNTLTRVQFKLALHYFKNHLQCAA.

Positions 1–22 are ER exit and post-Golgi subcellular localization; that stretch reads MGSAGFSVGKFHVEVASRGREC. Residues 1 to 67 are Cytoplasmic-facing; the sequence is MGSAGFSVGK…HGRSRRQGSR (67 aa). The Vesicular targeting motif lies at 9–15; the sequence is GKFHVEV. A helical; Signal-anchor for type II membrane protein transmembrane segment spans residues 68 to 88; the sequence is FLWLLKILVIILVLGIVGFMF. Residues 89 to 566 are Lumenal-facing; the sequence is GSMFLQAVFS…YFKNHLQCAA (478 aa).

The protein belongs to the glycosyltransferase 2 family. In terms of assembly, homodimer; disulfide-linked. Widely expressed. Highly expressed in colon and to a lesser extent in kidney, stomach, ileum and rectum.

The protein localises to the golgi apparatus. The protein resides in the trans-Golgi network membrane. It localises to the cytoplasmic vesicle membrane. It catalyses the reaction an N-acetyl-alpha-neuraminyl-(2-&gt;3)-beta-D-galactosyl derivative + UDP-N-acetyl-alpha-D-galactosamine = an N-acetyl-beta-D-galactosaminyl-(1-&gt;4)-[N-acetyl-alpha-neuraminyl-(2-&gt;3)]-beta-D-galactosyl derivative + UDP + H(+). It carries out the reaction a 3-O-{alpha-Neu5Ac-(2-&gt;3)-beta-D-Gal-(1-&gt;3)-[alpha-Neu5Ac-(2-&gt;6)]-alpha-D-GalNAc}-L-seryl-[protein] + UDP-N-acetyl-alpha-D-galactosamine = a 3-O-{[alpha-Neu5Ac-(2-&gt;3)]-beta-D-GalNAc-(1-&gt;4)-beta-D-Gal-(1-&gt;3)-[alpha-Neu5Ac-(2-&gt;6)]-alpha-D-GalNAc}-L-seryl-[protein] + UDP + H(+). The enzyme catalyses a 3-O-{alpha-Neu5Ac-(2-&gt;3)-beta-D-Gal-(1-&gt;3)-[alpha-Neu5Ac-(2-&gt;6)]-alpha-D-GalNAc}-L-threonyl-[protein] + UDP-N-acetyl-alpha-D-galactosamine = a 3-O-{[alpha-Neu5Ac-(2-&gt;3)]-beta-D-GalNAc-(1-&gt;4)-beta-D-Gal-(1-&gt;3)-[alpha-Neu5Ac-(2-&gt;6)]-alpha-D-GalNAc}-L-threonyl-[protein] + UDP + H(+). The catalysed reaction is a neolactoside IV(3)-alpha-NeuAc-nLc4Cer + UDP-N-acetyl-alpha-D-galactosamine = a neolactoside IV(4)-GalNAc,IV(3)-alpha-NeuAc-nLc4Cer + UDP + H(+). The protein operates within protein modification; protein glycosylation. It functions in the pathway glycolipid biosynthesis. In terms of biological role, beta-1,4 N-acetylgalactosaminyltransferase involved in the biosynthesis of Sd(a) histo-blood group antigen. Catalyzes the transfer of N-acetylgalactosamine (GalNAc) group in a beta-1,4-linkage from UDP-GalNAc to the galactose residue of NeuAcalpha2-&gt;3Gal-R to form Sd(a) glycan epitope GalNAcbeta1-&gt;4(NeuAcalpha2-&gt;3)Gal-R. The Sd(a) epitope is carried in O- and N-linked glycoproteins and glycolipids, including O-linked core 1 structures on GYPA/glycophorin, SLC4A1 and SLC29A1 in erythrocytes, N-linked glycans attached to the Tamm-Horsfall glycoprotein UMOD/uromodulin in renal fluids, O-linked core 3 glycans on mucins in colon and neolactosides in gastric mucosa. Confers protection against influenza A virus strains that attach to NeuAcalpha2-&gt;3-carrying host receptors. Modifies N-glycan chains on host receptors and prevents virus entry into cells. This chain is Beta-1,4 N-acetylgalactosaminyltransferase 2, found in Homo sapiens (Human).